The sequence spans 468 residues: Gasdermin-C (468 aa).

The triggers pyroptosis stretch occupies residues 1–230 (MSYTFDWLSK…CVILTSANTK (230 aa)).

The protein belongs to the gasdermin family. In terms of assembly, homooligomer; homooligomeric ring-shaped pore complex containing 27-28 subunits when inserted in the membrane. In terms of processing, cleavage by CASP8 relieves autoinhibition by releasing the N-terminal moiety (Gasdermin-C, N-terminal) that initiates pyroptosis. Post-translationally, palmitoylated.

The protein localises to the cytoplasm. The protein resides in the cytosol. It localises to the cell membrane. Its activity is regulated as follows. The full-length protein before cleavage is inactive: intramolecular interactions between N- and C-terminal domains mediate autoinhibition in the absence of activation signal. The intrinsic pyroptosis-inducing activity is carried by the released N-terminal moiety (Gasdermin-C, N-terminal) following cleavage by caspase CASP8. Its function is as follows. This form constitutes the precursor of the pore-forming protein: upon cleavage, the released N-terminal moiety (Gasdermin-C, N-terminal) binds to membranes and forms pores, triggering pyroptosis. In terms of biological role, pore-forming protein that causes membrane permeabilization and pyroptosis. Produced by the cleavage of gasdermin-C by caspase CASP8 in response to death signals. After cleavage, moves to the plasma membrane where it strongly binds to membrane inner leaflet lipids. Homooligomerizes within the membrane and forms pores of 10-15 nanometers (nm) of inner diameter, triggering pyroptosis. In Mus musculus (Mouse), this protein is Gasdermin-C.